Here is a 426-residue protein sequence, read N- to C-terminus: Histidine--tRNA ligase (426 aa).

This sequence belongs to the class-II aminoacyl-tRNA synthetase family. Homodimer.

It localises to the cytoplasm. It catalyses the reaction tRNA(His) + L-histidine + ATP = L-histidyl-tRNA(His) + AMP + diphosphate + H(+). The chain is Histidine--tRNA ligase from Corynebacterium kroppenstedtii (strain DSM 44385 / JCM 11950 / CIP 105744 / CCUG 35717).